We begin with the raw amino-acid sequence, 231 residues long: NADH-ubiquinone oxidoreductase chain 4 (231 aa).

The next 6 membrane-spanning stretches (helical) occupy residues 1–21 (PIAGSMVLAAILLKLGGYGII), 34–54 (MFLPFIVLALWGAILANLTCL), 63–85 (IAYSSISHMGLVVATIIIQTPWG), 89–111 (ALALMIAHGFTSSALFCLANTTY), 128–148 (ILPMATTWWLLANLMNIAIPP), and 169–189 (TIIMLGLSMLITASYSLHMFL).

This sequence belongs to the complex I subunit 4 family.

It localises to the mitochondrion membrane. It catalyses the reaction a ubiquinone + NADH + 5 H(+)(in) = a ubiquinol + NAD(+) + 4 H(+)(out). Core subunit of the mitochondrial membrane respiratory chain NADH dehydrogenase (Complex I) that is believed to belong to the minimal assembly required for catalysis. Complex I functions in the transfer of electrons from NADH to the respiratory chain. The immediate electron acceptor for the enzyme is believed to be ubiquinone. This chain is NADH-ubiquinone oxidoreductase chain 4 (MT-ND4), found in Bothrocophias hyoprora (Amazonian hognose viper).